A 427-amino-acid polypeptide reads, in one-letter code: NADH-quinone oxidoreductase subunit 14 (427 aa).

14 helical membrane-spanning segments follow: residues 1–21, 30–50, 57–77, 79–99, 104–124, 137–157, 172–192, 204–224, 230–250, 257–277, 280–300, 322–342, 360–380, and 400–420; these read MTLA…FVLP, LLGL…PFAF, GVSQ…VGLV, SGRF…HLLA, LLLM…LATW, FLLG…FYGA, YALA…LAPF, PTPV…AALL, PEAL…AALA, LLAY…YTGN, ALGF…AVLS, LGLA…LAGF, VLVL…GLGL, and AAVV…GLVL.

Belongs to the complex I subunit 2 family. NDH-1 is composed of 15 different subunits, Nqo1 to Nqo15. The complex has a L-shaped structure, with the hydrophobic arm (subunits Nqo7, Nqo8 and Nqo10 to Nqo14) embedded in the membrane and the hydrophilic peripheral arm (subunits Nqo1 to Nqo6, Nqo9 and Nqo15) protruding into the bacterial cytoplasm. The hydrophilic domain contains all the redox centers.

The protein resides in the cell inner membrane. The catalysed reaction is a quinone + NADH + 5 H(+)(in) = a quinol + NAD(+) + 4 H(+)(out). Functionally, NDH-1 shuttles electrons from NADH, via FMN and iron-sulfur (Fe-S) centers, to quinones in the respiratory chain. The immediate electron acceptor for the enzyme in this species is menaquinone. Couples the redox reaction to proton translocation (for every two electrons transferred, four hydrogen ions are translocated across the cytoplasmic membrane), and thus conserves the redox energy in a proton gradient required for the synthesis of ATP. The protein is NADH-quinone oxidoreductase subunit 14 (nqo14) of Thermus thermophilus (strain ATCC 27634 / DSM 579 / HB8).